We begin with the raw amino-acid sequence, 37 residues long: Large ribosomal subunit protein bL36 (37 aa).

The protein belongs to the bacterial ribosomal protein bL36 family.

The chain is Large ribosomal subunit protein bL36 from Vesicomyosocius okutanii subsp. Calyptogena okutanii (strain HA).